We begin with the raw amino-acid sequence, 390 residues long: MATACPPLSLQPAYLSGRSARARRPPPAVRCSAVGEVMAETAAVGTAEEPLLVSAIKGRKVERPPVWLMRQAGRYMKSYQLLCERHPSFRERSENVDLVVEISLQPWKVFKPDGVILFSDILTPLPGMNIPFDIVKGKGPVIFDPLRTAAAVNEVREFVPEEWVPYVGQALNILREEVNNEAAVLGFVGAPFTLASYCVEGGSSKNFSKIKKMAFSEPEILHNLLQKFTTSMANYIKYQADNGAQAVQIFDSWATELSPVDFEEFSLPYLKQIVDSVKETHPELPLILYASGSGGLLERLPLTGVDVVSLDWTVDMAEGRKRLGSNIAVQGNVDPGVLFGSKEFISKRIFDTVQKAGNSGHVLNLGHGIKVGTPEENVAHFFEVAKGIRY.

Residues 1 to 30 (MATACPPLSLQPAYLSGRSARARRPPPAVR) constitute a chloroplast transit peptide. Substrate-binding positions include 70–74 (RQAGR), phenylalanine 89, serine 119, aspartate 120, tyrosine 197, serine 252, and histidine 367.

Belongs to the uroporphyrinogen decarboxylase family. In terms of assembly, homodimer.

It localises to the plastid. The protein localises to the chloroplast. The catalysed reaction is uroporphyrinogen III + 4 H(+) = coproporphyrinogen III + 4 CO2. Its pathway is porphyrin-containing compound metabolism; protoporphyrin-IX biosynthesis; coproporphyrinogen-III from 5-aminolevulinate: step 4/4. Catalyzes the decarboxylation of four acetate groups of uroporphyrinogen-III to yield coproporphyrinogen-III. This Oryza sativa subsp. japonica (Rice) protein is Uroporphyrinogen decarboxylase 2, chloroplastic.